The sequence spans 104 residues: MAIIPDKQDSTVLERKQQKLKPPSMYKVVLLNDDFTPMEFVVMVVQEYFKKDRETATQIMLKVHREGRGVCGVYTRDIASTKVEQVVTHARQAGHPLQCVMEEA.

The protein belongs to the ClpS family. In terms of assembly, binds to the N-terminal domain of the chaperone ClpA.

Functionally, involved in the modulation of the specificity of the ClpAP-mediated ATP-dependent protein degradation. The sequence is that of ATP-dependent Clp protease adapter protein ClpS from Burkholderia ambifaria (strain MC40-6).